We begin with the raw amino-acid sequence, 287 residues long: Homoserine kinase (287 aa).

ATP is bound at residue 78–88 (PLSRGLGSSST).

This sequence belongs to the GHMP kinase family. Homoserine kinase subfamily.

The protein localises to the cytoplasm. The catalysed reaction is L-homoserine + ATP = O-phospho-L-homoserine + ADP + H(+). It functions in the pathway amino-acid biosynthesis; L-threonine biosynthesis; L-threonine from L-aspartate: step 4/5. In terms of biological role, catalyzes the ATP-dependent phosphorylation of L-homoserine to L-homoserine phosphate. The polypeptide is Homoserine kinase (Lactobacillus gasseri (strain ATCC 33323 / DSM 20243 / BCRC 14619 / CIP 102991 / JCM 1131 / KCTC 3163 / NCIMB 11718 / NCTC 13722 / AM63)).